The chain runs to 458 residues: Adenylosuccinate synthetase (458 aa).

GTP contacts are provided by residues 17 to 23 (GDEGKGK) and 45 to 47 (GHT). Catalysis depends on D18, which acts as the Proton acceptor. D18 and G45 together coordinate Mg(2+). IMP is bound by residues 18–21 (DEGK), 43–46 (NAGH), T137, R151, Q247, T262, and R330. H46 functions as the Proton donor in the catalytic mechanism. 326–332 (VTTGRSR) provides a ligand contact to substrate. Residues R332, 358–360 (KLD), and 440–442 (STG) contribute to the GTP site.

It belongs to the adenylosuccinate synthetase family. In terms of assembly, homodimer. The cofactor is Mg(2+).

The protein resides in the cytoplasm. It catalyses the reaction IMP + L-aspartate + GTP = N(6)-(1,2-dicarboxyethyl)-AMP + GDP + phosphate + 2 H(+). It participates in purine metabolism; AMP biosynthesis via de novo pathway; AMP from IMP: step 1/2. Functionally, plays an important role in the de novo pathway of purine nucleotide biosynthesis. Catalyzes the first committed step in the biosynthesis of AMP from IMP. In Albidiferax ferrireducens (strain ATCC BAA-621 / DSM 15236 / T118) (Rhodoferax ferrireducens), this protein is Adenylosuccinate synthetase.